Reading from the N-terminus, the 225-residue chain is Large ribosomal subunit protein uL4 (225 aa).

The interval 46–102 (KRQGTHATKGRGEVRGGGRKPFRQKGTGRARQGSIRAPHFTGGGTVHGPQPRDYSQR) is disordered. A compositionally biased stretch (basic residues) spans 62 to 73 (GGRKPFRQKGTG).

This sequence belongs to the universal ribosomal protein uL4 family. In terms of assembly, part of the 50S ribosomal subunit.

One of the primary rRNA binding proteins, this protein initially binds near the 5'-end of the 23S rRNA. It is important during the early stages of 50S assembly. It makes multiple contacts with different domains of the 23S rRNA in the assembled 50S subunit and ribosome. Its function is as follows. Forms part of the polypeptide exit tunnel. The sequence is that of Large ribosomal subunit protein uL4 from Corynebacterium urealyticum (strain ATCC 43042 / DSM 7109).